Consider the following 49-residue polypeptide: Defensin Tm-AMP-D1.2 (49 aa).

4 cysteine pairs are disulfide-bonded: cysteine 3/cysteine 49, cysteine 14/cysteine 34, cysteine 20/cysteine 43, and cysteine 24/cysteine 45.

In terms of biological role, plant defense peptide. In Triticum monococcum (Einkorn wheat), this protein is Defensin Tm-AMP-D1.2.